The primary structure comprises 465 residues: GTPase Der (465 aa).

2 EngA-type G domains span residues 3–167 (PLVA…PERG) and 179–352 (IHIA…VSAL). Residues 9–16 (GRPNVGKS), 57–61 (DTGGM), 119–122 (NKID), 185–192 (GRPNVGKS), 232–236 (DTAGL), and 297–300 (NKWD) each bind GTP. The KH-like domain occupies 353 to 437 (RQFSTSEVNK…PVRFLFREGD (85 aa)).

The protein belongs to the TRAFAC class TrmE-Era-EngA-EngB-Septin-like GTPase superfamily. EngA (Der) GTPase family. Associates with the 50S ribosomal subunit.

GTPase that plays an essential role in the late steps of ribosome biogenesis. The chain is GTPase Der from Xylella fastidiosa (strain 9a5c).